The chain runs to 197 residues: Shikimate kinase (197 aa).

Gly-26–Arg-31 serves as a coordination point for ATP. Residue Ser-30 coordinates Mg(2+). Substrate-binding residues include Asp-48, Arg-72, and Gly-94. Arg-132 contacts ATP. Arg-150 serves as a coordination point for substrate.

Belongs to the shikimate kinase family. Monomer. Mg(2+) serves as cofactor.

It localises to the cytoplasm. The catalysed reaction is shikimate + ATP = 3-phosphoshikimate + ADP + H(+). Its pathway is metabolic intermediate biosynthesis; chorismate biosynthesis; chorismate from D-erythrose 4-phosphate and phosphoenolpyruvate: step 5/7. In terms of biological role, catalyzes the specific phosphorylation of the 3-hydroxyl group of shikimic acid using ATP as a cosubstrate. In Prochlorococcus marinus (strain MIT 9211), this protein is Shikimate kinase.